We begin with the raw amino-acid sequence, 242 residues long: DNA repair protein RecO (242 aa).

This sequence belongs to the RecO family. As to quaternary structure, monomer.

Involved in DNA repair and RecF pathway recombination. In Shigella boydii serotype 18 (strain CDC 3083-94 / BS512), this protein is DNA repair protein RecO.